A 342-amino-acid chain; its full sequence is DNA primase small subunit PriS (342 aa).

Active-site residues include Asp97, Asp99, and Asp236.

The protein belongs to the eukaryotic-type primase small subunit family. In terms of assembly, heterodimer of a small subunit (PriS) and a large subunit (PriL). Mg(2+) is required as a cofactor. Requires Mn(2+) as cofactor.

Its function is as follows. Catalytic subunit of DNA primase, an RNA polymerase that catalyzes the synthesis of short RNA molecules used as primers for DNA polymerase during DNA replication. The small subunit contains the primase catalytic core and has DNA synthesis activity on its own. Binding to the large subunit stabilizes and modulates the activity, increasing the rate of DNA synthesis while decreasing the length of the DNA fragments, and conferring RNA synthesis capability. The DNA polymerase activity may enable DNA primase to also catalyze primer extension after primer synthesis. May also play a role in DNA repair. In Aeropyrum pernix (strain ATCC 700893 / DSM 11879 / JCM 9820 / NBRC 100138 / K1), this protein is DNA primase small subunit PriS.